Here is a 474-residue protein sequence, read N- to C-terminus: Cbb3-type cytochrome c oxidase subunit CcoN1 (474 aa).

Topologically, residues 1-16 are cytoplasmic; it reads MNTATSTAYSYKVVRQ. Residues 17 to 37 form a helical membrane-spanning segment; sequence FAIMTVVWGIVGMGLGVFIAA. Over 38-60 the chain is Periplasmic; the sequence is QLAWPFLNFDLPWTSFGRLRPLH. Histidine 60 is a binding site for heme b. Residues 61–81 form a helical membrane-spanning segment; the sequence is TNAVIFAFGGCALFATSYYSV. Residues 82 to 96 are Cytoplasmic-facing; that stretch reads QRTCQTTLFAPKLAA. The chain crosses the membrane as a helical span at residues 97 to 117; it reads FTFWGWQLVILLAAISLPLGF. Residues 118–129 lie on the Periplasmic side of the membrane; it reads TSSKEYAELEWP. The chain crosses the membrane as a helical span at residues 130–150; it reads IDILITIVWVAYAVVFFGTLA. Over 151–156 the chain is Cytoplasmic; sequence KRKVKH. Residues 157–177 traverse the membrane as a helical segment; the sequence is IYVGNWFFGAFILTVAILHVV. The Periplasmic segment spans residues 178–205; that stretch reads NNLEIPVTAMKSYSLYAGATDAMVQWWY. Residues 206 to 226 traverse the membrane as a helical segment; the sequence is GHNAVGFFLTAGFLGIMYYFV. Residue histidine 207 participates in Cu cation binding. The Cytoplasmic segment spans residues 227–238; it reads PKQAERPVYSYR. The helical transmembrane segment at 239–259 threads the bilayer; it reads LSIVHFWALITVYIWAGPHHL. Residues histidine 257 and histidine 258 each coordinate Cu cation. At 260–270 the chain is on the periplasmic side; that stretch reads HYTALPDWAQS. A helical transmembrane segment spans residues 271 to 291; it reads LGMVMSLILLAPSWGGMINGM. Topologically, residues 292-308 are cytoplasmic; it reads MTLSGAWHKLRSDPILR. The helical transmembrane segment at 309 to 329 threads the bilayer; it reads FLVVSLAFYGMSTFEGPMMAI. Residues 330–345 lie on the Periplasmic side of the membrane; sequence KTVNALSHYTDWTIGH. Histidine 345 and histidine 347 together coordinate heme b. A helical transmembrane segment spans residues 346–366; the sequence is VHAGALGWVAMVSIGALYHLV. The Cytoplasmic segment spans residues 367-384; that stretch reads PKVFGREQMHSIGLINTH. The chain crosses the membrane as a helical span at residues 385–405; the sequence is FWLATIGTVLYIASMWVNGIA. The Periplasmic portion of the chain corresponds to 406 to 432; it reads QGLMWRAINDDGTLTYSFVESLEASHP. Residues 433 to 453 traverse the membrane as a helical segment; the sequence is GFVVRMIGGAIFFAGMLVMAY. Residues 454 to 474 are Cytoplasmic-facing; that stretch reads NTWRTVQAAKPAEYDAAAQIA.

It belongs to the heme-copper respiratory oxidase family. As to quaternary structure, component of the cbb3-type cytochrome c oxidase at least composed of CcoN, CcoO, CcoQ and CcoP. It depends on Cu(2+) as a cofactor. Requires heme b as cofactor.

It is found in the cell inner membrane. It carries out the reaction 4 Fe(II)-[cytochrome c] + O2 + 8 H(+)(in) = 4 Fe(III)-[cytochrome c] + 2 H2O + 4 H(+)(out). The protein operates within energy metabolism; oxidative phosphorylation. Functionally, cbb3-type cytochrome c oxidase is the component of the respiratory chain that catalyzes the reduction of oxygen to water. Subunits CcoN and CcoO form the functional core of the enzyme complex. Subunits CcoP and CcoQ may optionally bind to the core. CcoN is the catalytic subunit of the enzyme. Electrons originating in cytochrome c or a quinol are transferred to the bimetallic center formed by a high-spin heme and copper B. The complex also functions as a proton pump. In Stutzerimonas stutzeri (Pseudomonas stutzeri), this protein is Cbb3-type cytochrome c oxidase subunit CcoN1.